Consider the following 384-residue polypeptide: Ribosomal RNA small subunit methyltransferase H (384 aa).

S-adenosyl-L-methionine contacts are provided by residues 99-101, aspartate 118, tyrosine 145, aspartate 169, and glutamine 176; that span reads GGH.

The protein belongs to the methyltransferase superfamily. RsmH family.

Its subcellular location is the cytoplasm. It catalyses the reaction cytidine(1402) in 16S rRNA + S-adenosyl-L-methionine = N(4)-methylcytidine(1402) in 16S rRNA + S-adenosyl-L-homocysteine + H(+). Functionally, specifically methylates the N4 position of cytidine in position 1402 (C1402) of 16S rRNA. This is Ribosomal RNA small subunit methyltransferase H from Mycobacteroides abscessus (strain ATCC 19977 / DSM 44196 / CCUG 20993 / CIP 104536 / JCM 13569 / NCTC 13031 / TMC 1543 / L948) (Mycobacterium abscessus).